The chain runs to 276 residues: Large ribosomal subunit protein uL2 (276 aa).

The tract at residues 225 to 276 is disordered; the sequence is MNPVDHPHGGGEGRAPVGRKHPVTPWGKPAMGAKTRKKRKLSDKLIVKPRNK. Positions 258–276 are enriched in basic residues; it reads KTRKKRKLSDKLIVKPRNK.

Belongs to the universal ribosomal protein uL2 family. Part of the 50S ribosomal subunit. Forms a bridge to the 30S subunit in the 70S ribosome.

Functionally, one of the primary rRNA binding proteins. Required for association of the 30S and 50S subunits to form the 70S ribosome, for tRNA binding and peptide bond formation. It has been suggested to have peptidyltransferase activity; this is somewhat controversial. Makes several contacts with the 16S rRNA in the 70S ribosome. In Moorella thermoacetica (strain ATCC 39073 / JCM 9320), this protein is Large ribosomal subunit protein uL2.